Here is a 169-residue protein sequence, read N- to C-terminus: uncharacterized protein (169 aa).

The region spanning 4–160 is the N-acetyltransferase domain; it reads IEVKRLLVNY…EGVKEQLSED (157 aa).

This is an uncharacterized protein from Halalkalibacterium halodurans (strain ATCC BAA-125 / DSM 18197 / FERM 7344 / JCM 9153 / C-125) (Bacillus halodurans).